Reading from the N-terminus, the 59-residue chain is MSGCGFLLLALLLLVTVEATKMEKKNFGILFYFTRPRNNFVRIGRRDMQSPLLSERLRF.

A signal peptide spans 1 to 19 (MSGCGFLLLALLLLVTVEA). Residues 20 to 25 (TKMEKK) constitute a propeptide that is removed on maturation. Position 43 is an isoleucine amide (isoleucine 43). Positions 45–59 (RRDMQSPLLSERLRF) are excised as a propeptide.

Belongs to the FARP (FMRFamide related peptide) family. Expressed by the venom duct.

It localises to the secreted. In terms of biological role, neurotoxin that is active on vertebrates. When tested at high doses (10 uM), the toxin affects all zebrafish and mouse DRG neurons in culture, which could be an indication of an effect on a widely expressed receptor or ion channel found in both species. At low doses (1 uM), the effects of the toxin are confined to a specific subpopulation of zebrafish and mouse DRG neurons. In vivo, it induces long-lasting dramatic alterations in the locomotor behavior of zebrafish larvae. It rapidly induces hypoactivity and death of larvae at high doses and it causes hyperactivity at lower doses. In zebrafish adults, intramuscular injection causes the decrease of the movements and visited spaces. In mice, intracranial injection causes lethargy and prolonges sleeping phases and reduced movement. In Conus episcopatus (Bishop's cone), this protein is Conorfamide-Ep1.